Consider the following 604-residue polypeptide: Elongation factor 4 (604 aa).

One can recognise a tr-type G domain in the interval 7-190 (SRLRNFCIIA…IVDRVPAPPD (184 aa)). GTP is bound by residues 19–24 (DHGKST) and 136–139 (NKID).

It belongs to the TRAFAC class translation factor GTPase superfamily. Classic translation factor GTPase family. LepA subfamily.

The protein localises to the cell inner membrane. It carries out the reaction GTP + H2O = GDP + phosphate + H(+). Functionally, required for accurate and efficient protein synthesis under certain stress conditions. May act as a fidelity factor of the translation reaction, by catalyzing a one-codon backward translocation of tRNAs on improperly translocated ribosomes. Back-translocation proceeds from a post-translocation (POST) complex to a pre-translocation (PRE) complex, thus giving elongation factor G a second chance to translocate the tRNAs correctly. Binds to ribosomes in a GTP-dependent manner. In Synechococcus sp. (strain RCC307), this protein is Elongation factor 4.